Reading from the N-terminus, the 229-residue chain is Thiamine-phosphate synthase (229 aa).

4-amino-2-methyl-5-(diphosphooxymethyl)pyrimidine is bound by residues 38–42 and Asn-73; that span reads QFREK. Mg(2+) is bound by residues Asp-74 and Asp-93. Ser-111 contributes to the 4-amino-2-methyl-5-(diphosphooxymethyl)pyrimidine binding site. 137–139 is a 2-[(2R,5Z)-2-carboxy-4-methylthiazol-5(2H)-ylidene]ethyl phosphate binding site; that stretch reads TLS. Lys-140 is a binding site for 4-amino-2-methyl-5-(diphosphooxymethyl)pyrimidine. Residues Gly-169 and 189-190 each bind 2-[(2R,5Z)-2-carboxy-4-methylthiazol-5(2H)-ylidene]ethyl phosphate; that span reads IS.

It belongs to the thiamine-phosphate synthase family. Mg(2+) is required as a cofactor.

It catalyses the reaction 2-[(2R,5Z)-2-carboxy-4-methylthiazol-5(2H)-ylidene]ethyl phosphate + 4-amino-2-methyl-5-(diphosphooxymethyl)pyrimidine + 2 H(+) = thiamine phosphate + CO2 + diphosphate. The catalysed reaction is 2-(2-carboxy-4-methylthiazol-5-yl)ethyl phosphate + 4-amino-2-methyl-5-(diphosphooxymethyl)pyrimidine + 2 H(+) = thiamine phosphate + CO2 + diphosphate. The enzyme catalyses 4-methyl-5-(2-phosphooxyethyl)-thiazole + 4-amino-2-methyl-5-(diphosphooxymethyl)pyrimidine + H(+) = thiamine phosphate + diphosphate. The protein operates within cofactor biosynthesis; thiamine diphosphate biosynthesis; thiamine phosphate from 4-amino-2-methyl-5-diphosphomethylpyrimidine and 4-methyl-5-(2-phosphoethyl)-thiazole: step 1/1. Functionally, condenses 4-methyl-5-(beta-hydroxyethyl)thiazole monophosphate (THZ-P) and 2-methyl-4-amino-5-hydroxymethyl pyrimidine pyrophosphate (HMP-PP) to form thiamine monophosphate (TMP). The polypeptide is Thiamine-phosphate synthase (Streptococcus suis (strain 98HAH33)).